Consider the following 504-residue polypeptide: Protein Dok-7 (504 aa).

In terms of domain architecture, PH spans 4 to 109; that stretch reads AALVEGQVKL…WDARIRYALG (106 aa). Residues 105-210 form the IRS-type PTB domain; sequence RYALGEVHRF…RGISPTKGPF (106 aa). Disordered regions lie at residues 210-229, 249-351, and 411-483; these read FGLR…TVEE, SHAG…YSSS, and LCLA…PHAG. Low complexity-rich tracts occupy residues 263 to 279 and 288 to 310; these read LSSS…SASS and SSSS…AGEA. The span at 331 to 341 shows a compositional bias: polar residues; the sequence is GRQSSSDSGIA.

As to quaternary structure, homodimer. Forms a heterotetramer composed of 2 DOK7 and 2 MUSK molecules which facilitates MUSK trans-autophosphorylation on tyrosine residue and activation. Interacts (via IRS-type PTB domain) with MUSK (via cytoplasmic part); requires MUSK phosphorylation. As to expression, preferentially expressed in skeletal muscle and heart. Present in thigh muscle, diaphragm and heart but not in the liver or spleen (at protein level).

The protein localises to the cell membrane. It is found in the synapse. Functionally, probable muscle-intrinsic activator of MUSK that plays an essential role in neuromuscular synaptogenesis. Acts in aneural activation of MUSK and subsequent acetylcholine receptor (AchR) clustering in myotubes. Induces autophosphorylation of MUSK. The sequence is that of Protein Dok-7 (DOK7) from Homo sapiens (Human).